We begin with the raw amino-acid sequence, 241 residues long: uncharacterized protein (241 aa).

This is an uncharacterized protein from Saccharolobus islandicus (Sulfolobus islandicus).